The chain runs to 160 residues: Oocyte-secreted protein 4B (160 aa).

Positions 1 to 13 are cleaved as a signal peptide; the sequence is MKTSVLLAITAMC.

The protein belongs to the PLAC1 family.

The protein localises to the secreted. In Homo sapiens (Human), this protein is Oocyte-secreted protein 4B.